Here is a 567-residue protein sequence, read N- to C-terminus: Chitinase 3 (567 aa).

A signal peptide spans 1 to 16 (MLYLLTIFSLLLPALA). Positions 23–313 (SNVAVYWGQN…ENMKAIVKKA (291 aa)) constitute a GH18 domain. The active-site Proton donor is the Glu157. Residue Asn159 is glycosylated (N-linked (GlcNAc...) asparagine). The disordered stretch occupies residues 313–471 (ASPGEETTSS…TSALSSSTTT (159 aa)). Composition is skewed to low complexity over residues 319–436 (TTSS…SLSS) and 444–471 (STTT…STTT).

This sequence belongs to the glycosyl hydrolase 18 family. Chitinase class III subfamily.

It localises to the secreted. The enzyme catalyses Random endo-hydrolysis of N-acetyl-beta-D-glucosaminide (1-&gt;4)-beta-linkages in chitin and chitodextrins.. Its function is as follows. Chitinase involved in the remodeling of chitin in the fungal cell wall. Plays a role in cell separation. In Candida albicans (strain SC5314 / ATCC MYA-2876) (Yeast), this protein is Chitinase 3 (CHT3).